Consider the following 341-residue polypeptide: S-adenosylmethionine:tRNA ribosyltransferase-isomerase (341 aa).

This sequence belongs to the QueA family. Monomer.

It localises to the cytoplasm. The catalysed reaction is 7-aminomethyl-7-carbaguanosine(34) in tRNA + S-adenosyl-L-methionine = epoxyqueuosine(34) in tRNA + adenine + L-methionine + 2 H(+). It participates in tRNA modification; tRNA-queuosine biosynthesis. Its function is as follows. Transfers and isomerizes the ribose moiety from AdoMet to the 7-aminomethyl group of 7-deazaguanine (preQ1-tRNA) to give epoxyqueuosine (oQ-tRNA). The protein is S-adenosylmethionine:tRNA ribosyltransferase-isomerase of Clostridium botulinum (strain Okra / Type B1).